The chain runs to 79 residues: Dolichyl-diphosphooligosaccharide--protein glycosyltransferase subunit TMEM258 (79 aa).

The next 2 membrane-spanning stretches (helical) occupy residues 17–37 (VFPH…AWFF) and 59–79 (VASL…GIFV).

The protein belongs to the OST5 family. Component of the oligosaccharyltransferase (OST) complex.

It is found in the membrane. Its subcellular location is the endoplasmic reticulum. It localises to the cytoplasm. Its pathway is protein modification; protein glycosylation. In terms of biological role, subunit of the oligosaccharyl transferase (OST) complex that catalyzes the initial transfer of a defined glycan (Glc(3)Man(9)GlcNAc(2) in eukaryotes) from the lipid carrier dolichol-pyrophosphate to an asparagine residue within an Asn-X-Ser/Thr consensus motif in nascent polypeptide chains, the first step in protein N-glycosylation. N-glycosylation occurs cotranslationally and the complex associates with the Sec61 complex at the channel-forming translocon complex that mediates protein translocation across the endoplasmic reticulum (ER). All subunits are required for a maximal enzyme activity. The protein is Dolichyl-diphosphooligosaccharide--protein glycosyltransferase subunit TMEM258 of Danio rerio (Zebrafish).